The chain runs to 518 residues: Motile sperm domain-containing protein 2 (518 aa).

Over 1-496 the chain is Cytoplasmic; that stretch reads MAENNAQNKA…QLQRSIWFQQ (496 aa). The 155-residue stretch at 85 to 239 folds into the CRAL-TRIO domain; it reads IPRWLLELGG…HMGGTDPFKY (155 aa). Residues 252–312 are disordered; that stretch reads PLCENGPIAS…KDENEKVDSK (61 aa). Basic and acidic residues-rich tracts occupy residues 265–279 and 300–312; these read TSSKEDIEGDGKETL and VSKKDENEKVDSK. An MSP domain is found at 327-445; it reads LLHISPAEEL…MEHRLRCHTV (119 aa). Residues 365-366 form a required for FFAT motif binding and phosphorylated FFAT motif binding region; the sequence is RT. The helical; Anchor for type IV membrane protein transmembrane segment at 497 to 518 threads the bilayer; sequence LLLALTMVLLDFVVSFFYSLYN.

In terms of assembly, homooligomer. Interacts (via MSP domain) with STARD3NL (via FFAT motif), RMDN3 (via FFAT motif), OSBPL1A (via FFAT motif) and CERT1 (via FFAT motif). Interacts (via MSP domain) with STARD3 (via phosphorylated FFAT motif); this interaction depends on the critical phosphorylation of STARD3 on 'Ser-209'. Interacts with RB1CC1 (via phosphorylated FFAT motif), MIGA2 (via phosphorylated FFAT motif) and OSBPL1A (via FFAT motif).

It localises to the endoplasmic reticulum membrane. Functionally, endoplasmic reticulum-anchored protein that mediates the formation of contact sites between the endoplasmic (ER) and endosomes, mitochondria or Golgi through interaction with conventional- and phosphorylated-FFAT-containing organelle-bound proteins. In addition, forms endoplasmic reticulum (ER)-lipid droplets (LDs) contacts through a direct protein-membrane interaction and participates in LDs homeostasis. The attachment mechanism involves an amphipathic helix that has an affinity for lipid packing defects present at the surface of LDs. Promotes migration of primary monocytes and neutrophils, in response to various chemokines. The sequence is that of Motile sperm domain-containing protein 2 from Mus musculus (Mouse).